Consider the following 161-residue polypeptide: Ribosome maturation factor RimP (161 aa).

Belongs to the RimP family.

It localises to the cytoplasm. In terms of biological role, required for maturation of 30S ribosomal subunits. The sequence is that of Ribosome maturation factor RimP from Rickettsia typhi (strain ATCC VR-144 / Wilmington).